Consider the following 644-residue polypeptide: ATP-dependent zinc metalloprotease FtsH (644 aa).

Residues 1–11 (MNDNKNNTVRN) are Stromal-facing. A helical membrane pass occupies residues 12-32 (LLIGIALLSGISLTAKKFDLI). Residues 33–128 (GVQGSESGKN…FDAHPAEQKN (96 aa)) are Lumenal-facing. Residues 129–149 (IFVNILSNILLPIIFITGLVY) form a helical membrane-spanning segment. The Stromal segment spans residues 150–644 (LFQNSENFGG…KNIPYVSKFN (495 aa)). 226 to 233 (GPPGTGKT) serves as a coordination point for ATP. His447 provides a ligand contact to Zn(2+). Residue Glu448 is part of the active site. His451 and Asp525 together coordinate Zn(2+).

In the central section; belongs to the AAA ATPase family. It in the C-terminal section; belongs to the peptidase M41 family. In terms of assembly, homohexamer. It depends on Zn(2+) as a cofactor.

The protein resides in the plastid. Its subcellular location is the chloroplast thylakoid membrane. Its function is as follows. Acts as a processive, ATP-dependent zinc metallopeptidase. This Trieres chinensis (Marine centric diatom) protein is ATP-dependent zinc metalloprotease FtsH.